Reading from the N-terminus, the 223-residue chain is ATP-dependent dethiobiotin synthetase BioD (223 aa).

T16 serves as a coordination point for Mg(2+). K37 is a catalytic residue. Position 41 (S41) interacts with substrate. Mg(2+) contacts are provided by D50 and E111. ATP contacts are provided by residues D50, 111 to 114 (EGAG), and 171 to 172 (NR).

Belongs to the dethiobiotin synthetase family. Homodimer. Mg(2+) serves as cofactor.

It is found in the cytoplasm. The catalysed reaction is (7R,8S)-7,8-diammoniononanoate + CO2 + ATP = (4R,5S)-dethiobiotin + ADP + phosphate + 3 H(+). It participates in cofactor biosynthesis; biotin biosynthesis; biotin from 7,8-diaminononanoate: step 1/2. In terms of biological role, catalyzes a mechanistically unusual reaction, the ATP-dependent insertion of CO2 between the N7 and N8 nitrogen atoms of 7,8-diaminopelargonic acid (DAPA, also called 7,8-diammoniononanoate) to form a ureido ring. The sequence is that of ATP-dependent dethiobiotin synthetase BioD from Anaeromyxobacter dehalogenans (strain 2CP-1 / ATCC BAA-258).